The primary structure comprises 285 residues: Bifunctional protein FolD (285 aa).

NADP(+) contacts are provided by residues 166 to 168 (GAS) and I232.

This sequence belongs to the tetrahydrofolate dehydrogenase/cyclohydrolase family. As to quaternary structure, homodimer.

The enzyme catalyses (6R)-5,10-methylene-5,6,7,8-tetrahydrofolate + NADP(+) = (6R)-5,10-methenyltetrahydrofolate + NADPH. It catalyses the reaction (6R)-5,10-methenyltetrahydrofolate + H2O = (6R)-10-formyltetrahydrofolate + H(+). Its pathway is one-carbon metabolism; tetrahydrofolate interconversion. Its function is as follows. Catalyzes the oxidation of 5,10-methylenetetrahydrofolate to 5,10-methenyltetrahydrofolate and then the hydrolysis of 5,10-methenyltetrahydrofolate to 10-formyltetrahydrofolate. The polypeptide is Bifunctional protein FolD (Pseudoalteromonas atlantica (strain T6c / ATCC BAA-1087)).